We begin with the raw amino-acid sequence, 500 residues long: Cobyric acid synthase (500 aa).

The GATase cobBQ-type domain maps to 253–446 (KIGVAAIYFP…FHGFFDRPEV (194 aa)). Catalysis depends on Cys-334, which acts as the Nucleophile. His-438 is a catalytic residue.

It belongs to the CobB/CobQ family. CobQ subfamily.

The protein operates within cofactor biosynthesis; adenosylcobalamin biosynthesis. Functionally, catalyzes amidations at positions B, D, E, and G on adenosylcobyrinic A,C-diamide. NH(2) groups are provided by glutamine, and one molecule of ATP is hydrogenolyzed for each amidation. This is Cobyric acid synthase from Chlorobaculum tepidum (strain ATCC 49652 / DSM 12025 / NBRC 103806 / TLS) (Chlorobium tepidum).